The following is a 367-amino-acid chain: Cytochrome-c peroxidase IdrP2 (367 aa).

An N-terminal signal peptide occupies residues 1 to 28 (MTTHQSIRRLSRIAALVGLAFVAGTVAA). Cytochrome c domains are found at residues 47–157 (DMVE…AMWQ) and 200–345 (SQQK…EALS). Cys69, Cys72, His73, Cys215, Cys218, and His219 together coordinate heme c.

As to quaternary structure, the iodate reductase (Idr) complex is composed of a molybdopterin-dependent iodate reductase (IdrA and IdrB subunits) and two associated peroxidases (IdrP1 and IdrP2). Heme c is required as a cofactor.

The protein resides in the periplasm. The enzyme catalyses 2 Fe(II)-[cytochrome c] + H2O2 + 2 H(+) = 2 Fe(III)-[cytochrome c] + 2 H2O. Involved in iodate respiration. May play a critical role in detoxification of inadvertent H(2)O(2) generated by the iodate reductase IdrA/IdrB. This chain is Cytochrome-c peroxidase IdrP2, found in Denitromonas iodatirespirans.